The sequence spans 443 residues: Tol-Pal system protein TolB (443 aa).

The signal sequence occupies residues 1 to 24 (MSFQIRVFTAILAVLSLFTAPVLA). Residues 424–443 (LRPVRTPEGGSDPSWSPLQR) form a disordered region.

Belongs to the TolB family. In terms of assembly, the Tol-Pal system is composed of five core proteins: the inner membrane proteins TolA, TolQ and TolR, the periplasmic protein TolB and the outer membrane protein Pal. They form a network linking the inner and outer membranes and the peptidoglycan layer.

It localises to the periplasm. Its function is as follows. Part of the Tol-Pal system, which plays a role in outer membrane invagination during cell division and is important for maintaining outer membrane integrity. The chain is Tol-Pal system protein TolB from Roseobacter denitrificans (strain ATCC 33942 / OCh 114) (Erythrobacter sp. (strain OCh 114)).